An 878-amino-acid polypeptide reads, in one-letter code: Alanine--tRNA ligase (878 aa).

4 residues coordinate Zn(2+): histidine 558, histidine 562, cysteine 663, and histidine 667.

Belongs to the class-II aminoacyl-tRNA synthetase family. It depends on Zn(2+) as a cofactor.

The protein resides in the cytoplasm. The enzyme catalyses tRNA(Ala) + L-alanine + ATP = L-alanyl-tRNA(Ala) + AMP + diphosphate. Its function is as follows. Catalyzes the attachment of alanine to tRNA(Ala) in a two-step reaction: alanine is first activated by ATP to form Ala-AMP and then transferred to the acceptor end of tRNA(Ala). Also edits incorrectly charged Ser-tRNA(Ala) and Gly-tRNA(Ala) via its editing domain. The polypeptide is Alanine--tRNA ligase (Mycoplasmopsis synoviae (strain 53) (Mycoplasma synoviae)).